The sequence spans 152 residues: Large-conductance mechanosensitive channel (152 aa).

The next 2 membrane-spanning stretches (helical) occupy residues 14-34 and 81-101; these read VIDLAIGVIIGGAFGKIVTSL and GLFLNNLINFLIIAFSIFIAI.

It belongs to the MscL family. Homopentamer.

It localises to the cell membrane. Channel that opens in response to stretch forces in the membrane lipid bilayer. May participate in the regulation of osmotic pressure changes within the cell. This chain is Large-conductance mechanosensitive channel, found in Clostridium perfringens (strain 13 / Type A).